Consider the following 160-residue polypeptide: Cytochrome b6-f complex subunit 4 (160 aa).

Helical transmembrane passes span 36-56, 95-115, and 131-151; these read LLYI…GLAV, LLGV…PFLE, and TVFL…TLPI.

This sequence belongs to the cytochrome b family. PetD subfamily. In terms of assembly, the 4 large subunits of the cytochrome b6-f complex are cytochrome b6, subunit IV (17 kDa polypeptide, petD), cytochrome f and the Rieske protein, while the 4 small subunits are petG, petL, petM and petN. The complex functions as a dimer.

It is found in the plastid. It localises to the chloroplast thylakoid membrane. In terms of biological role, component of the cytochrome b6-f complex, which mediates electron transfer between photosystem II (PSII) and photosystem I (PSI), cyclic electron flow around PSI, and state transitions. In Solanum tuberosum (Potato), this protein is Cytochrome b6-f complex subunit 4.